Consider the following 87-residue polypeptide: UPF0248 protein TON_0940 (87 aa).

Belongs to the UPF0248 family.

The chain is UPF0248 protein TON_0940 from Thermococcus onnurineus (strain NA1).